The following is a 141-amino-acid chain: Nucleoside diphosphate kinase (141 aa).

Lys-11, Phe-59, Arg-87, Thr-93, Arg-104, and Asn-114 together coordinate ATP. Catalysis depends on His-117, which acts as the Pros-phosphohistidine intermediate.

The protein belongs to the NDK family. In terms of assembly, homotetramer. Mg(2+) serves as cofactor.

Its subcellular location is the cytoplasm. The enzyme catalyses a 2'-deoxyribonucleoside 5'-diphosphate + ATP = a 2'-deoxyribonucleoside 5'-triphosphate + ADP. It catalyses the reaction a ribonucleoside 5'-diphosphate + ATP = a ribonucleoside 5'-triphosphate + ADP. Functionally, major role in the synthesis of nucleoside triphosphates other than ATP. The ATP gamma phosphate is transferred to the NDP beta phosphate via a ping-pong mechanism, using a phosphorylated active-site intermediate. The sequence is that of Nucleoside diphosphate kinase from Neisseria gonorrhoeae (strain NCCP11945).